The primary structure comprises 581 residues: Zinc finger protein 674 (581 aa).

The KRAB domain maps to Leu-8–Ala-79. C2H2-type zinc fingers lie at residues Tyr-224–His-246, Tyr-252–His-274, Tyr-280–His-302, and Phe-308–His-330. The segment covering Pro-357–Ser-371 has biased composition (basic and acidic residues). The interval Pro-357–Arg-377 is disordered. 7 C2H2-type zinc fingers span residues Tyr-385–His-407, Tyr-413–His-435, Tyr-441–His-463, Tyr-469–His-491, Tyr-497–His-519, Tyr-525–His-547, and Tyr-553–His-575.

Belongs to the krueppel C2H2-type zinc-finger protein family. Expressed in testis.

It localises to the nucleus. In terms of biological role, may be involved in transcriptional regulation. The protein is Zinc finger protein 674 (ZNF674) of Homo sapiens (Human).